Consider the following 550-residue polypeptide: Palmdelphin (550 aa).

An N-acetylmethionine modification is found at Met-1. A coiled-coil region spans residues 2–106 (EEAELVKERL…LQISTNEEAI (105 aa)). Lys-125 is covalently cross-linked (Glycyl lysine isopeptide (Lys-Gly) (interchain with G-Cter in SUMO2)). At Ser-135 the chain carries Phosphoserine. Residue Lys-179 forms a Glycyl lysine isopeptide (Lys-Gly) (interchain with G-Cter in SUMO1); alternate linkage. A Glycyl lysine isopeptide (Lys-Gly) (interchain with G-Cter in SUMO2); alternate cross-link involves residue Lys-179. The span at 248 to 259 (ERNSKSPTEYHE) shows a compositional bias: basic and acidic residues. Residues 248 to 280 (ERNSKSPTEYHEPVYANPFCRPTTPQREKVTPG) form a disordered region. Thr-271 bears the Phosphothreonine mark. A phosphoserine mark is found at Ser-321, Ser-370, Ser-384, and Ser-385. Disordered stretches follow at residues 356 to 393 (VMQDKYTPSPKSGLSPSRALVEKSERQSSSPPCQEDEK) and 463 to 528 (HPIA…IAGD). Basic and acidic residues predominate over residues 483 to 494 (KRAEVNPHENTN). Residues Ser-497, Ser-514, and Ser-519 each carry the phosphoserine modification.

Belongs to the paralemmin family. In terms of assembly, interacts with GLUL. Post-translationally, phosphorylated.

Its subcellular location is the cytoplasm. It is found in the cell projection. It localises to the dendrite. The protein localises to the dendritic spine. The polypeptide is Palmdelphin (PALMD) (Bos taurus (Bovine)).